Here is a 155-residue protein sequence, read N- to C-terminus: Large ribosomal subunit protein uL22c (155 aa).

This sequence belongs to the universal ribosomal protein uL22 family. As to quaternary structure, part of the 50S ribosomal subunit.

It localises to the plastid. The protein localises to the chloroplast. Its function is as follows. This protein binds specifically to 23S rRNA. In terms of biological role, the globular domain of the protein is located near the polypeptide exit tunnel on the outside of the subunit, while an extended beta-hairpin is found that lines the wall of the exit tunnel in the center of the 70S ribosome. In Solanum tuberosum (Potato), this protein is Large ribosomal subunit protein uL22c (rpl22).